Here is a 521-residue protein sequence, read N- to C-terminus: 2-isopropylmalate synthase (521 aa).

Positions 12-274 (VIIFDTTLRD…WNKIDTTMLT (263 aa)) constitute a Pyruvate carboxyltransferase domain. The Mn(2+) site is built by aspartate 21, histidine 209, histidine 211, and asparagine 245. The regulatory domain stretch occupies residues 398 to 521 (KLVSLTVIAG…DMAAPAAAAS (124 aa)).

It belongs to the alpha-IPM synthase/homocitrate synthase family. LeuA type 1 subfamily. As to quaternary structure, homodimer. Requires Mn(2+) as cofactor.

Its subcellular location is the cytoplasm. The catalysed reaction is 3-methyl-2-oxobutanoate + acetyl-CoA + H2O = (2S)-2-isopropylmalate + CoA + H(+). It functions in the pathway amino-acid biosynthesis; L-leucine biosynthesis; L-leucine from 3-methyl-2-oxobutanoate: step 1/4. Functionally, catalyzes the condensation of the acetyl group of acetyl-CoA with 3-methyl-2-oxobutanoate (2-ketoisovalerate) to form 3-carboxy-3-hydroxy-4-methylpentanoate (2-isopropylmalate). The polypeptide is 2-isopropylmalate synthase (Rhodopseudomonas palustris (strain BisA53)).